Here is a 428-residue protein sequence, read N- to C-terminus: 3-phosphoshikimate 1-carboxyvinyltransferase (428 aa).

The 3-phosphoshikimate site is built by lysine 21, serine 22, and arginine 26. Lysine 21 serves as a coordination point for phosphoenolpyruvate. Phosphoenolpyruvate is bound by residues glycine 91 and arginine 119. 3-phosphoshikimate contacts are provided by serine 164, glutamine 166, aspartate 313, and lysine 340. Glutamine 166 provides a ligand contact to phosphoenolpyruvate. The active-site Proton acceptor is aspartate 313. Phosphoenolpyruvate is bound by residues arginine 344 and arginine 386.

The protein belongs to the EPSP synthase family. As to quaternary structure, monomer.

It localises to the cytoplasm. The catalysed reaction is 3-phosphoshikimate + phosphoenolpyruvate = 5-O-(1-carboxyvinyl)-3-phosphoshikimate + phosphate. It functions in the pathway metabolic intermediate biosynthesis; chorismate biosynthesis; chorismate from D-erythrose 4-phosphate and phosphoenolpyruvate: step 6/7. Catalyzes the transfer of the enolpyruvyl moiety of phosphoenolpyruvate (PEP) to the 5-hydroxyl of shikimate-3-phosphate (S3P) to produce enolpyruvyl shikimate-3-phosphate and inorganic phosphate. The chain is 3-phosphoshikimate 1-carboxyvinyltransferase from Campylobacter jejuni subsp. jejuni serotype O:23/36 (strain 81-176).